Reading from the N-terminus, the 122-residue chain is Large ribosomal subunit protein bL12 (122 aa).

It belongs to the bacterial ribosomal protein bL12 family. As to quaternary structure, homodimer. Part of the ribosomal stalk of the 50S ribosomal subunit. Forms a multimeric L10(L12)X complex, where L10 forms an elongated spine to which 2 to 4 L12 dimers bind in a sequential fashion. Binds GTP-bound translation factors.

Forms part of the ribosomal stalk which helps the ribosome interact with GTP-bound translation factors. Is thus essential for accurate translation. The chain is Large ribosomal subunit protein bL12 from Histophilus somni (strain 129Pt) (Haemophilus somnus).